Reading from the N-terminus, the 383-residue chain is ATP phosphoribosyltransferase regulatory subunit (383 aa).

Belongs to the class-II aminoacyl-tRNA synthetase family. HisZ subfamily. Heteromultimer composed of HisG and HisZ subunits.

The protein localises to the cytoplasm. The protein operates within amino-acid biosynthesis; L-histidine biosynthesis; L-histidine from 5-phospho-alpha-D-ribose 1-diphosphate: step 1/9. Required for the first step of histidine biosynthesis. May allow the feedback regulation of ATP phosphoribosyltransferase activity by histidine. The protein is ATP phosphoribosyltransferase regulatory subunit of Cupriavidus necator (strain ATCC 17699 / DSM 428 / KCTC 22496 / NCIMB 10442 / H16 / Stanier 337) (Ralstonia eutropha).